A 263-amino-acid polypeptide reads, in one-letter code: Indolethylamine N-methyltransferase (263 aa).

An N6-succinyllysine modification is found at Lys13. S-adenosyl-L-methionine contacts are provided by residues Tyr20, Tyr25, 63–64 (GS), Tyr69, Asp85, and Asn90. At Lys96 the chain carries N6-succinyllysine. Residues 142–143 (DA) and Leu163 contribute to the S-adenosyl-L-methionine site.

This sequence belongs to the class I-like SAM-binding methyltransferase superfamily. NNMT/PNMT/TEMT family. As to quaternary structure, monomer. As to expression, highly expressed in lung, also detected in liver and at very low levels in brain.

The protein resides in the cytoplasm. It carries out the reaction a tertiary amine + S-adenosyl-L-methionine = a methylated tertiary amine + S-adenosyl-L-homocysteine + H(+). The enzyme catalyses a secondary amine + S-adenosyl-L-methionine = a methylated secondary amine + S-adenosyl-L-homocysteine + H(+). The catalysed reaction is a primary amine + S-adenosyl-L-methionine = a methylated primary amine + S-adenosyl-L-homocysteine + H(+). It catalyses the reaction dimethyl sulfide + S-adenosyl-L-methionine = trimethylsulfonium + S-adenosyl-L-homocysteine. Functionally, catalyzes the N-methylation of tryptamine and structurally related compounds. Functions as a thioether S-methyltransferase and is active with a variety of thioethers and the corresponding selenium and tellurium compounds, including 3-methylthiopropionaldehyde, dimethyl selenide, dimethyl telluride, 2-methylthioethylamine, 2-methylthioethanol, methyl-n-propyl sulfide and diethyl sulfide. Plays an important role in the detoxification of selenium compounds. In Oryctolagus cuniculus (Rabbit), this protein is Indolethylamine N-methyltransferase (INMT).